The primary structure comprises 206 residues: LexA repressor (206 aa).

Residues 28 to 48 constitute a DNA-binding region (H-T-H motif); the sequence is RAEIATRLGFKSANAAEEHLK. Catalysis depends on for autocatalytic cleavage activity residues Ser123 and Lys160.

It belongs to the peptidase S24 family. In terms of assembly, homodimer.

It catalyses the reaction Hydrolysis of Ala-|-Gly bond in repressor LexA.. Functionally, represses a number of genes involved in the response to DNA damage (SOS response), including recA and lexA. In the presence of single-stranded DNA, RecA interacts with LexA causing an autocatalytic cleavage which disrupts the DNA-binding part of LexA, leading to derepression of the SOS regulon and eventually DNA repair. This chain is LexA repressor, found in Shewanella oneidensis (strain ATCC 700550 / JCM 31522 / CIP 106686 / LMG 19005 / NCIMB 14063 / MR-1).